The following is a 457-amino-acid chain: Dihydrolipoyl dehydrogenase (457 aa).

FAD-binding positions include 32–40 (EKQYFGGVC), Lys49, and Ala113. A disulfide bridge connects residues Cys40 and Cys45. NAD(+) contacts are provided by residues 178–182 (GGGVI), Val235, and 262–265 (SIGR). Asp303 and Ala311 together coordinate FAD. His437 (proton acceptor) is an active-site residue.

Belongs to the class-I pyridine nucleotide-disulfide oxidoreductase family. Homodimer. Requires FAD as cofactor.

Its subcellular location is the cytoplasm. It carries out the reaction N(6)-[(R)-dihydrolipoyl]-L-lysyl-[protein] + NAD(+) = N(6)-[(R)-lipoyl]-L-lysyl-[protein] + NADH + H(+). Its function is as follows. Lipoamide dehydrogenase is a component of the alpha-ketoacid dehydrogenase complexes. The polypeptide is Dihydrolipoyl dehydrogenase (pdhD) (Mycoplasma genitalium (strain ATCC 33530 / DSM 19775 / NCTC 10195 / G37) (Mycoplasmoides genitalium)).